The primary structure comprises 89 residues: Small ribosomal subunit protein uS15 (89 aa).

It belongs to the universal ribosomal protein uS15 family. Part of the 30S ribosomal subunit. Forms a bridge to the 50S subunit in the 70S ribosome, contacting the 23S rRNA.

In terms of biological role, one of the primary rRNA binding proteins, it binds directly to 16S rRNA where it helps nucleate assembly of the platform of the 30S subunit by binding and bridging several RNA helices of the 16S rRNA. Its function is as follows. Forms an intersubunit bridge (bridge B4) with the 23S rRNA of the 50S subunit in the ribosome. The sequence is that of Small ribosomal subunit protein uS15 from Renibacterium salmoninarum (strain ATCC 33209 / DSM 20767 / JCM 11484 / NBRC 15589 / NCIMB 2235).